Consider the following 239-residue polypeptide: Probable transcriptional regulatory protein BBR47_14810 (239 aa).

This sequence belongs to the TACO1 family. YeeN subfamily.

It localises to the cytoplasm. This chain is Probable transcriptional regulatory protein BBR47_14810, found in Brevibacillus brevis (strain 47 / JCM 6285 / NBRC 100599).